A 317-amino-acid polypeptide reads, in one-letter code: 4-hydroxy-3-methylbut-2-enyl diphosphate reductase (317 aa).

Position 12 (cysteine 12) interacts with [4Fe-4S] cluster. (2E)-4-hydroxy-3-methylbut-2-enyl diphosphate is bound by residues histidine 41 and histidine 74. Histidine 41 and histidine 74 together coordinate dimethylallyl diphosphate. The isopentenyl diphosphate site is built by histidine 41 and histidine 74. Cysteine 96 contributes to the [4Fe-4S] cluster binding site. Histidine 124 contributes to the (2E)-4-hydroxy-3-methylbut-2-enyl diphosphate binding site. Histidine 124 provides a ligand contact to dimethylallyl diphosphate. Histidine 124 is a binding site for isopentenyl diphosphate. Catalysis depends on glutamate 126, which acts as the Proton donor. Threonine 168 contributes to the (2E)-4-hydroxy-3-methylbut-2-enyl diphosphate binding site. Position 198 (cysteine 198) interacts with [4Fe-4S] cluster. Positions 226, 227, 228, and 270 each coordinate (2E)-4-hydroxy-3-methylbut-2-enyl diphosphate. 4 residues coordinate dimethylallyl diphosphate: serine 226, serine 227, asparagine 228, and serine 270. 4 residues coordinate isopentenyl diphosphate: serine 226, serine 227, asparagine 228, and serine 270.

It belongs to the IspH family. It depends on [4Fe-4S] cluster as a cofactor.

It carries out the reaction isopentenyl diphosphate + 2 oxidized [2Fe-2S]-[ferredoxin] + H2O = (2E)-4-hydroxy-3-methylbut-2-enyl diphosphate + 2 reduced [2Fe-2S]-[ferredoxin] + 2 H(+). The catalysed reaction is dimethylallyl diphosphate + 2 oxidized [2Fe-2S]-[ferredoxin] + H2O = (2E)-4-hydroxy-3-methylbut-2-enyl diphosphate + 2 reduced [2Fe-2S]-[ferredoxin] + 2 H(+). The protein operates within isoprenoid biosynthesis; dimethylallyl diphosphate biosynthesis; dimethylallyl diphosphate from (2E)-4-hydroxy-3-methylbutenyl diphosphate: step 1/1. It functions in the pathway isoprenoid biosynthesis; isopentenyl diphosphate biosynthesis via DXP pathway; isopentenyl diphosphate from 1-deoxy-D-xylulose 5-phosphate: step 6/6. Catalyzes the conversion of 1-hydroxy-2-methyl-2-(E)-butenyl 4-diphosphate (HMBPP) into a mixture of isopentenyl diphosphate (IPP) and dimethylallyl diphosphate (DMAPP). Acts in the terminal step of the DOXP/MEP pathway for isoprenoid precursor biosynthesis. The polypeptide is 4-hydroxy-3-methylbut-2-enyl diphosphate reductase (Chromohalobacter salexigens (strain ATCC BAA-138 / DSM 3043 / CIP 106854 / NCIMB 13768 / 1H11)).